Here is a 388-residue protein sequence, read N- to C-terminus: GTPase Obg (388 aa).

The Obg domain maps to 1-159 (MKFIDEASIR…RSLRLELLLL (159 aa)). Residues 160–333 (ADVGLLGMPN…LSLKLLDYIA (174 aa)) enclose the OBG-type G domain. Residues 166 to 173 (GMPNAGKS), 191 to 195 (FTTLV), 213 to 216 (DIPG), 283 to 286 (NKTD), and 314 to 316 (SAF) each bind GTP. 2 residues coordinate Mg(2+): S173 and T193.

The protein belongs to the TRAFAC class OBG-HflX-like GTPase superfamily. OBG GTPase family. As to quaternary structure, monomer. Mg(2+) serves as cofactor.

It is found in the cytoplasm. An essential GTPase which binds GTP, GDP and possibly (p)ppGpp with moderate affinity, with high nucleotide exchange rates and a fairly low GTP hydrolysis rate. Plays a role in control of the cell cycle, stress response, ribosome biogenesis and in those bacteria that undergo differentiation, in morphogenesis control. The protein is GTPase Obg of Shewanella denitrificans (strain OS217 / ATCC BAA-1090 / DSM 15013).